The primary structure comprises 547 residues: Probable bifunctional tRNA threonylcarbamoyladenosine biosynthesis protein (547 aa).

A kae1 region spans residues 1 to 329 (MKKTFILGIE…FRTDDVKVTW (329 aa)). Residues His113, His117, and Tyr134 each coordinate Fe cation. L-threonylcarbamoyladenylate-binding positions include 134 to 138 (YVSGA), Asp166, Gly179, Glu183, and Asn262. Asp290 contacts Fe cation. The Protein kinase domain occupies 340 to 547 (EISPETFFRM…EEIKKRARYA (208 aa)). ATP contacts are provided by residues 355–363 (LDNGAEAVV) and Lys377. Catalysis depends on Asp464, which acts as the Proton acceptor; for kinase activity.

This sequence in the N-terminal section; belongs to the KAE1 / TsaD family. The protein in the C-terminal section; belongs to the protein kinase superfamily. Tyr protein kinase family. BUD32 subfamily. In terms of assembly, component of the KEOPS complex that consists of Kae1, Bud32, Cgi121 and Pcc1; the whole complex dimerizes. Requires Fe(2+) as cofactor.

It is found in the cytoplasm. The enzyme catalyses L-seryl-[protein] + ATP = O-phospho-L-seryl-[protein] + ADP + H(+). It carries out the reaction L-threonyl-[protein] + ATP = O-phospho-L-threonyl-[protein] + ADP + H(+). It catalyses the reaction L-threonylcarbamoyladenylate + adenosine(37) in tRNA = N(6)-L-threonylcarbamoyladenosine(37) in tRNA + AMP + H(+). Its function is as follows. Required for the formation of a threonylcarbamoyl group on adenosine at position 37 (t(6)A37) in tRNAs that read codons beginning with adenine. Is a component of the KEOPS complex that is probably involved in the transfer of the threonylcarbamoyl moiety of threonylcarbamoyl-AMP (TC-AMP) to the N6 group of A37. The Kae1 domain likely plays a direct catalytic role in this reaction. The Bud32 domain probably displays kinase activity that regulates Kae1 function. The polypeptide is Probable bifunctional tRNA threonylcarbamoyladenosine biosynthesis protein (Methanosarcina mazei (strain ATCC BAA-159 / DSM 3647 / Goe1 / Go1 / JCM 11833 / OCM 88) (Methanosarcina frisia)).